The chain runs to 406 residues: Pygopus homolog 2 (406 aa).

Disordered regions lie at residues 1-73 (MAAS…DHLV) and 106-323 (VQGG…PQPP). A2 is subject to N-acetylalanine. A Phosphoserine modification is found at S40. Residues 41–47 (PEKKRRK) carry the Nuclear localization signal motif. Pro residues-rich tracts occupy residues 131–141 (RQPPPFPPNPM) and 149–158 (PQGPGYPPPG). The segment covering 164 to 179 (SQPFNQPLGQNFSPPS) has biased composition (polar residues). Residues 236 to 252 (SLPPNTSPFPGPDPGFP) show a composition bias toward pro residues. The span at 285-296 (NGNQPSFPPNSS) shows a compositional bias: polar residues. Position 302 is a phosphothreonine (T302). Residues 327 to 385 (VYPCGACRSEVNDDQDAILCEASCQKWFHRECTGMTESAYGLLTTEASAVWACDLCLKT) form a PHD-type zinc finger.

As to quaternary structure, binds to BCL9 via the PHD-type zinc finger motif, and thereby becomes part of the nuclear beta-catenin/TCF complex.

Its subcellular location is the nucleus. Functionally, involved in signal transduction through the Wnt pathway. The polypeptide is Pygopus homolog 2 (PYGO2) (Homo sapiens (Human)).